Reading from the N-terminus, the 174-residue chain is FAD synthase (174 aa).

ATP-binding positions include 34–35 (TF), 39–42 (HPGH), D119, and Y147.

It belongs to the archaeal FAD synthase family. In terms of assembly, homodimer. It depends on a divalent metal cation as a cofactor.

It catalyses the reaction FMN + ATP + H(+) = FAD + diphosphate. It functions in the pathway cofactor biosynthesis; FAD biosynthesis; FAD from FMN: step 1/1. In terms of biological role, catalyzes the transfer of the AMP portion of ATP to flavin mononucleotide (FMN) to produce flavin adenine dinucleotide (FAD) coenzyme. In Methanococcus voltae (strain ATCC BAA-1334 / A3), this protein is FAD synthase.